The sequence spans 408 residues: Homogentisate geranylgeranyltransferase (408 aa).

A chloroplast-targeting transit peptide spans 1 to 62; that stretch reads MQAVTAAAAA…TVMHKFSAIS (62 aa). The next 9 membrane-spanning stretches (helical) occupy residues 122–142, 156–176, 194–214, 221–241, 248–268, 286–306, 329–349, 352–372, and 386–406; these read HTIFGTIIGITSVSLLPMKSI, ALTAALCMNIYVVGLNQLYDI, SVATGVFLVLAFLIMSFSIGI, LMCALIVSFLLGSAYSIEAPF, ALLAASCILFVRAILVQLAFF, LVFATLFMCCFSAVIALFKDI, VYQLCISILLTAYGAATLVGA, TNLFQKIITVSGHGLLALTLW, and VTSFYMFIWKLFYAEYFLIPF.

This sequence belongs to the UbiA prenyltransferase family. Expressed in seeds.

It localises to the plastid. Its subcellular location is the chloroplast membrane. The enzyme catalyses homogentisate + (2E,6E,10E)-geranylgeranyl diphosphate + H(+) = 6-geranylgeranyl-2-methylbenzene-1,4-diol + CO2 + diphosphate. Its pathway is cofactor biosynthesis; tocopherol biosynthesis. Its function is as follows. Involved in the synthesis of tocotrienol (vitamin E). Catalyzes the condensation of homogentisate and geranylgeranyl diphosphate to form 2-methyl-6-geranylgeranylbenzoquinol. Possesses low activity with phytyl diphosphate as substrate. The protein is Homogentisate geranylgeranyltransferase of Hordeum vulgare (Barley).